A 229-amino-acid chain; its full sequence is uncharacterized protein (229 aa).

This is an uncharacterized protein from Mus musculus (Mouse).